The primary structure comprises 175 residues: ATP-dependent protease subunit HslV (175 aa).

Residue Thr-2 is part of the active site. Positions 159, 162, and 165 each coordinate Na(+).

Belongs to the peptidase T1B family. HslV subfamily. As to quaternary structure, a double ring-shaped homohexamer of HslV is capped on each side by a ring-shaped HslU homohexamer. The assembly of the HslU/HslV complex is dependent on binding of ATP.

Its subcellular location is the cytoplasm. The catalysed reaction is ATP-dependent cleavage of peptide bonds with broad specificity.. With respect to regulation, allosterically activated by HslU binding. Protease subunit of a proteasome-like degradation complex believed to be a general protein degrading machinery. The protein is ATP-dependent protease subunit HslV of Ligilactobacillus salivarius (strain UCC118) (Lactobacillus salivarius).